The following is a 324-amino-acid chain: HSF-like protein (324 aa).

The first 19 residues, 1–19 (MNSLVALVLLGQIIGSTVS), serve as a signal peptide directing secretion. 2 Cystatin fetuin-A-type domains span residues 21–130 (QLGP…VKCS) and 141–254 (RDCP…SDCV). Cystine bridges form between Cys-28–Cys-315, Cys-85–Cys-96, Cys-110–Cys-129, Cys-143–Cys-146, Cys-205–Cys-217, and Cys-230–Cys-253. N-linked (GlcNAc...) asparagine glycosylation is present at Asn-95. Asn-204 carries N-linked (GlcNAc...) asparagine glycosylation. A glycan (N-linked (GlcNAc...) asparagine) is linked at Asn-282.

Belongs to the fetuin family. As to quaternary structure, homodimer. In terms of tissue distribution, expressed by the liver.

It is found in the secreted. Functionally, may not have antihemorrhagic activity. This is HSF-like protein from Protobothrops flavoviridis (Habu).